The following is a 198-amino-acid chain: Recombination protein RecR (198 aa).

A C4-type zinc finger spans residues 57–72; sequence CSVCNNITDLDPCHIC. Residues 80 to 175 enclose the Toprim domain; the sequence is SIICVVQEPR…RVTRIAHGLP (96 aa).

It belongs to the RecR family.

In terms of biological role, may play a role in DNA repair. It seems to be involved in an RecBC-independent recombinational process of DNA repair. It may act with RecF and RecO. In Brevibacillus brevis (strain 47 / JCM 6285 / NBRC 100599), this protein is Recombination protein RecR.